The primary structure comprises 513 residues: ATP synthase subunit alpha (513 aa).

169-176 provides a ligand contact to ATP; it reads GDRQTGKT.

This sequence belongs to the ATPase alpha/beta chains family. In terms of assembly, F-type ATPases have 2 components, CF(1) - the catalytic core - and CF(0) - the membrane proton channel. CF(1) has five subunits: alpha(3), beta(3), gamma(1), delta(1), epsilon(1). CF(0) has three main subunits: a(1), b(2) and c(9-12). The alpha and beta chains form an alternating ring which encloses part of the gamma chain. CF(1) is attached to CF(0) by a central stalk formed by the gamma and epsilon chains, while a peripheral stalk is formed by the delta and b chains.

The protein localises to the cell inner membrane. It carries out the reaction ATP + H2O + 4 H(+)(in) = ADP + phosphate + 5 H(+)(out). Its function is as follows. Produces ATP from ADP in the presence of a proton gradient across the membrane. The alpha chain is a regulatory subunit. This Cupriavidus necator (strain ATCC 17699 / DSM 428 / KCTC 22496 / NCIMB 10442 / H16 / Stanier 337) (Ralstonia eutropha) protein is ATP synthase subunit alpha.